We begin with the raw amino-acid sequence, 83 residues long: Conotoxin p21a (83 aa).

Residues Pro24 and Pro43 each carry the 4-hydroxyproline; partial modification. Residue His83 is modified to Histidine amide.

May form a non-covalent dimer. In terms of processing, contains 5 disulfide bonds. Expressed by the venom duct.

It is found in the secreted. The sequence is that of Conotoxin p21a from Conus purpurascens (Purple cone).